We begin with the raw amino-acid sequence, 171 residues long: Cyclin-dependent kinase inhibitor 2A (171 aa).

The span at 33–42 (ASMHTKHESE) shows a compositional bias: basic and acidic residues. The tract at residues 33-52 (ASMHTKHESEESFSGEKLTE) is disordered. 3 ANK repeats span residues 45 to 74 (FSGE…NPNA), 78 to 106 (FGRS…EPNT), and 111 to 140 (TLTL…RLDV).

The protein belongs to the CDKN2 cyclin-dependent kinase inhibitor family. In terms of assembly, heterodimer with CDK4 or CDK6. Predominamt P16 complexes contained CDK6. Interacts with CDK4 (both 'T-172'-phosphorylated and non-phosphorylated forms); the interaction inhibits cyclin D-CDK4 kinase activity. Interacts with ISCO2. Expressed predominantly in lung and testis. In the testis, restricted to germ cells in the seminiferous epithelium. Not detected in premeiotic spermatogonia but high levels found in postmeiotic spermatids. In primary tumors, low levels detected in melanocytic hyperplasias. Higher levels found in non-metastatic and metastatic melanomas.

It localises to the cytoplasm. It is found in the nucleus. Its function is as follows. Acts as a negative regulator of the proliferation of normal cells by interacting strongly with CDK4 and CDK6. This inhibits their ability to interact with cyclins D and to phosphorylate the retinoblastoma protein. The sequence is that of Cyclin-dependent kinase inhibitor 2A from Monodelphis domestica (Gray short-tailed opossum).